The sequence spans 611 residues: ATP-dependent zinc metalloprotease FtsH (611 aa).

Residue M1 is a topological domain, cytoplasmic. The chain crosses the membrane as a helical span at residues 2–22 (VKNLIFWLVITVVLMSIFQNF). Residues 23-98 (NTNDVNNHKV…IGAIPEEPSL (76 aa)) lie on the Extracellular side of the membrane. A helical transmembrane segment spans residues 99–119 (FISILISWFPMLLLIGVWIFF). At 120 to 611 (MRQMQMGGGK…KGWIETDTNK (492 aa)) the chain is on the cytoplasmic side. 192–199 (GPPGTGKT) provides a ligand contact to ATP. H414 is a binding site for Zn(2+). The active site involves E415. Residues H418 and D492 each contribute to the Zn(2+) site.

The protein in the central section; belongs to the AAA ATPase family. In the C-terminal section; belongs to the peptidase M41 family. As to quaternary structure, homohexamer. Requires Zn(2+) as cofactor.

It is found in the cell membrane. Functionally, acts as a processive, ATP-dependent zinc metallopeptidase for both cytoplasmic and membrane proteins. Plays a role in the quality control of integral membrane proteins. This is ATP-dependent zinc metalloprotease FtsH from Buchnera aphidicola subsp. Acyrthosiphon pisum (strain APS) (Acyrthosiphon pisum symbiotic bacterium).